Consider the following 1345-residue polypeptide: MSVYHRYASGEYDKTYFEKASESRKHDDKVGRIQISPLLGQFSTSDTLYKFKEKSIEEWLAIFPKAAYFKGYDESLFGNVIIMVYENSHTGKLNTTSFSKFGVTSYDNLVLDARSRFWPSCENLLPSYQKSNVRRSLAITNLKNYNKLVNSPGNFYVNKSWDETYAGSLANNMQLISEKKPEKFGLKLLELGLLQTHCIQSTVLDVIYDNASSETSDKIVEENNKLVFLIGSQLEQLFDPLLEYSPEIMEFSYTVPVDAISPQIKNNELINTIISELLTVQTNFTMRLVNLLQNFIIPLRIHVLAATSSSGITKINQVFPPTIDEITRINCILHDSLKKASAFGYVEIMKAVGTIMPYFYKAFIRHEANLKNFRDNLAKFHSKNNKKIFENTMINKGNLGIRDIDSIVAGSLLELPKLKLILVRLKDSIIFEKTKLSNFEDDPSNEFFTIEKYFNSAVDVIDAFGFEEENNQTKIDIRQRVFTPTGKILTELASNWPPELQYGWLARKVVGIYEMRNIKPLNDTFYDLDILIIFSDHILFLTIVDDSYYNERNNESMKNLCVSDILMHSLVNDKPLPNLKSLPTMEVNCWCIINEVITTTYKGVSPITSKTQEFLKFVNISKTGFKNNNAENSTISKNYEILDGSDRGNVDGCKIIELINKSTVLNKRKPFHLFRSNDPKLHIYSIAQELSAYQEESCKSPMALYLNLSIHDPKKYFEENQTVHFVLNASFINDHQIHMVGFNRAETFELNEIISSNDLQVCLKEVIVKNFSLLFNTFSNISKMLTQGYAYDINYCANIFTQIDEIKLNEHRQEIAKNKSTDSISRPKTRNVSEIISIPEVYMNKISPSNTNTRDQRSQQRRTEKRLSTRSKNNSRDVEVKKSSQERPDKRNSMIKKVFRSLRRSFDGIENSTPKTEIHENNNTSKLQDSSSFSGKKNEYTSLYKPVPQLQTKEQKHVHEQVQVQEQGQGQGQGQEQEQGQEQEKEQEQSFSEANIPRDIDNYTGIQMRKECNNSVQQSRNTSGSLDVNSHFEFPPHLDSSFGSNNNTIILVNDNENRHKNRPAPEKISILDSTDDHSSNIPRRSENVGYGKFNVEDFYDDGEANWVSISNENYSLLNAEIRALKEEAHMDTEDIIELNDSDNITEDEMRDVYESKDFDAFYTPQNQSVAQFGDNPTSLKNENREMSTQSLASSEIIEVFGKQIDSNFRSDYIPNLNENLHSINSNKKFGFQNDHRFSVLTSSDDEFFSSDDFASSLPIERQENKKSHSPMIMNSSSSDATIINENFEEKLLPATPIDCDDKVLPSSQIHKNMQSSSIRSDSFSTTYESMTYLSEILNGHLNFSD.

Disordered stretches follow at residues 843-939 (MNKI…KKNE) and 951-998 (QTKE…NIPR). Basic and acidic residues-rich tracts occupy residues 854–867 (RDQRSQQRRTEKRL) and 874–892 (NSRDVEVKKSSQERPDKRN). The segment covering 893-903 (SMIKKVFRSLR) has biased composition (basic residues). Polar residues predominate over residues 910 to 935 (ENSTPKTEIHENNNTSKLQDSSSFSG). Positions 961–980 (QVQVQEQGQGQGQGQEQEQG) are enriched in low complexity.

Belongs to the BUD3 family.

In terms of biological role, co-assembles with BUD4 at bud sites. BUD4 and BUD3 may cooperate to recognize a spatial landmark (the neck filaments) during mitosis and they subsequently become a landmark for establishing the axial budding pattern in G1. This is Bud site selection protein 3 (BUD3) from Debaryomyces hansenii (strain ATCC 36239 / CBS 767 / BCRC 21394 / JCM 1990 / NBRC 0083 / IGC 2968) (Yeast).